The sequence spans 203 residues: MAAAAVSSAKRSLRGELKQRLRAMSAEERLRQSRVLSQKVIAHSEYQKSKRISIFLSMQDEIETEEIIKDIFQRGKICFIPRYRFQSNHMDMVRIESPEEISLLPKTSWNIPQPGEGDVREEALSTGGLDLIFMPGLGFDKHGNRLGRGKGYYDAYLKRCLQHQEVKPYTLALAFKEQICLQVPVNENDMKVDEVLYEDSSTA.

Ala-2 is subject to N-acetylalanine. ATP is bound by residues 10-14 (KRSLR) and Arg-14. Residues Leu-56, Glu-61, and 148–152 (RGKGY) contribute to the substrate site. 145-153 (RLGRGKGYY) provides a ligand contact to ATP. Mg(2+)-binding residues include Asp-154 and Asp-189.

It belongs to the 5-formyltetrahydrofolate cyclo-ligase family. Monomer. Requires Mg(2+) as cofactor.

Its subcellular location is the cytoplasm. It carries out the reaction (6S)-5-formyl-5,6,7,8-tetrahydrofolate + ATP = (6R)-5,10-methenyltetrahydrofolate + ADP + phosphate. In terms of biological role, contributes to tetrahydrofolate metabolism. Helps regulate carbon flow through the folate-dependent one-carbon metabolic network that supplies carbon for the biosynthesis of purines, thymidine and amino acids. Catalyzes the irreversible conversion of 5-formyltetrahydrofolate (5-FTHF) to yield 5,10-methenyltetrahydrofolate. The chain is 5-formyltetrahydrofolate cyclo-ligase (MTHFS) from Homo sapiens (Human).